A 138-amino-acid chain; its full sequence is Ribosome-binding factor A (138 aa).

A disordered region spans residues 117–138 (AEDGQHQEGPASADAKPESTEE).

Belongs to the RbfA family. Monomer. Binds 30S ribosomal subunits, but not 50S ribosomal subunits or 70S ribosomes.

The protein resides in the cytoplasm. Functionally, one of several proteins that assist in the late maturation steps of the functional core of the 30S ribosomal subunit. Associates with free 30S ribosomal subunits (but not with 30S subunits that are part of 70S ribosomes or polysomes). Required for efficient processing of 16S rRNA. May interact with the 5'-terminal helix region of 16S rRNA. The sequence is that of Ribosome-binding factor A from Pseudomonas syringae pv. syringae (strain B728a).